Reading from the N-terminus, the 1093-residue chain is MGWFNGPPSWAEMERVLDSKPRRAGESAAPEPDGPLSRGRATYRPPDEGRAARSSVPYAELHAHSAFSFLDGASTPEEMVEEAARLDLRALALTDHDGLYGAVRFAEAAAELDVRTVFGAELSLGPSARTEAPDPPGPHLLVLARGPEGYRRLSRQLAAAHLAGGEKGKPRYDLDALTEAAGGHWHILTGCRKGHVRQALSDGGPDAAARALADLVDRFGAARVSIELTRHGQPLDDERNAALAALAPRFGVGVVATTGAHFAGPSRRRLAMAMGAIRARESLDSAAGWLAPLGGSHLRSGAEMARLFAWRPQAVTAAAELGEQCAFGLALIAPRLPPFDVPDGHTEDSWLRQLTMTGARDRYGSPEHAPRAYAQIEHELKVIAQLQFPGYFLVVHDIARFCRENNILCQGRGSAANSAVCYALGVTAVDPVANELLFERFLSPARDGPPDIDMDIESDQREKVIQYVYDRYGRDYAAQVANVITYRGKIAVRDMARALGYSQGQQDAWSKQISSWSGPADSPDVEGIPPQVIDLANQVRNLPRHLGIHSGGMVICDRPIADVCPVEWARMENRSVLQWDKDDCAAIGLVKFDLLGLGMLSALHYAIDLVAEHKGIEVDLARLDLSEPAVYEMLARADSVGVFQVESRAQMATLPRLKPRVFYDLVVEVALIRPGPIQGGSVHPYIRRRNGVDPVLYDHPSMEPALRKTLGVPLFQEQLMQLAVDCAGFSAAEADQLRRAMGSKRSTERMRRLRSRFYDGMRALHGAPDEVIDRTYEKLEAFANFGFPESHALSFASLVFYSSWFKLHHPAAFCAALLRAQPMGFYSPQSLVADARRHGVTVHGPDVNASLAHATLENAGTEVRLGLGAVRHIGDDLAEKLVQERKANGPFTSLLDLTARLQLSVQQTEALATAGAFGCFGMSRREALWAAGAAATQRPDRLPGVGSSSHIPALPGMSELELAAADVWATGISPDSYPTQFLRDDLDAMGVVPAARLGSVPDGDRVLIAGAVTHRQRPGTAQGVTFLNLEDETGMVNVLCTPGVWARHRKLANTAPALLVRGQVQNASGAITVVAERLGRITLAVGSRSRDFR.

Positions 1–55 are disordered; that stretch reads MGWFNGPPSWAEMERVLDSKPRRAGESAAPEPDGPLSRGRATYRPPDEGRAARSS. Positions 12–25 are enriched in basic and acidic residues; it reads EMERVLDSKPRRAG.

The protein belongs to the DNA polymerase type-C family. DnaE2 subfamily.

It localises to the cytoplasm. It catalyses the reaction DNA(n) + a 2'-deoxyribonucleoside 5'-triphosphate = DNA(n+1) + diphosphate. DNA polymerase involved in damage-induced mutagenesis and translesion synthesis (TLS). It is not the major replicative DNA polymerase. In Mycolicibacterium paratuberculosis (strain ATCC BAA-968 / K-10) (Mycobacterium paratuberculosis), this protein is Error-prone DNA polymerase.